A 198-amino-acid polypeptide reads, in one-letter code: Large ribosomal subunit protein bL25 (198 aa).

It belongs to the bacterial ribosomal protein bL25 family. CTC subfamily. As to quaternary structure, part of the 50S ribosomal subunit; part of the 5S rRNA/L5/L18/L25 subcomplex. Contacts the 5S rRNA. Binds to the 5S rRNA independently of L5 and L18.

Its function is as follows. This is one of the proteins that binds to the 5S RNA in the ribosome where it forms part of the central protuberance. The polypeptide is Large ribosomal subunit protein bL25 (Pseudomonas putida (strain W619)).